The chain runs to 312 residues: MAQPELDLSKAPAHWGMNFTETTHQQPSRRIDPSNVTFPQGYTVVVIGAGKGIGEHIAKAYVQARAENIVITSRTGSDLDRVKKELETLAQQTGQAVKVSTLVQDATKPESYTKLKDLLEEGFNGRLDTLVFCAGGGPVGTLWTPHIDETDVDEWNESIALNFTGSYYAAKYLVPLMLRPQSHGKTIVNITSAASHFTGGNITPASYSIGKLALNRFTQILGENYADQGLVVVAVHPGSSPTPGALGSMPPSLHNILTDDQGLCGAVCVWISKEKRDWISGRYICATWDMDDLESKKEEIVKEDKLKWRMAV.

Valine 46, isoleucine 47, lysine 171, tyrosine 207, lysine 211, and threonine 242 together coordinate NADP(+). Catalysis depends on tyrosine 207, which acts as the Proton donor. Catalysis depends on lysine 211, which acts as the Lowers pKa of active site Tyr.

This sequence belongs to the short-chain dehydrogenases/reductases (SDR) family.

The protein operates within pigment biosynthesis. Its pathway is secondary metabolite biosynthesis. Its function is as follows. Short chain dehydrogenase; part of the gene cluster that mediates the biosynthesis of pleosporalin A, ascomycone A, as well as a third cryptic naphthoquinone derived pigment, all responsible for the coloration of conidia. Essential for the production of pleosporalin A, but not the 2 other final products. The pathway begins with the biosynthesis of the cyclized heptaketide 3-acetonyl-1,6,8-trihydroxy-2-naphthaldehyde by the NR-PKS pgmA. The C-6 hydroxyl group is further methylated by the O-methyltransferase pgmB to yield fusarubinaldehyde which is in turn oxidized by the cytochrome P450 monooxygenase pgmC at C-9. The C-1 hydroxyl group is then methylated spontaneously. Although pgmE, pgmD and pgmH are essential for the production of pleosporalin A, it is not the case for the 2 other final products and it remains difficult to assign a specific function to each enzyme. PgmF and pgmG seem not to be involved in pigment biosynthesis although they were regulated by the cluster-specific transcription factor pgmR. The polypeptide is Short chain dehydrogenase pgmD (Aspergillus terreus (strain NIH 2624 / FGSC A1156)).